The following is a 34-amino-acid chain: Photosystem II reaction center protein T (34 aa).

Residues 3–23 (ALVYTFLLVGTLGIIFFAIFF) traverse the membrane as a helical segment.

The protein belongs to the PsbT family. In terms of assembly, PSII is composed of 1 copy each of membrane proteins PsbA, PsbB, PsbC, PsbD, PsbE, PsbF, PsbH, PsbI, PsbJ, PsbK, PsbL, PsbM, PsbT, PsbY, PsbZ, Psb30/Ycf12, at least 3 peripheral proteins of the oxygen-evolving complex and a large number of cofactors. It forms dimeric complexes.

It is found in the plastid. The protein localises to the chloroplast thylakoid membrane. Functionally, found at the monomer-monomer interface of the photosystem II (PS II) dimer, plays a role in assembly and dimerization of PSII. PSII is a light-driven water plastoquinone oxidoreductase, using light energy to abstract electrons from H(2)O, generating a proton gradient subsequently used for ATP formation. This Klebsormidium bilatum (Filamentous green alga) protein is Photosystem II reaction center protein T.